A 1081-amino-acid polypeptide reads, in one-letter code: DNA polymerase catalytic subunit (1081 aa).

Belongs to the DNA polymerase type-B family. As to quaternary structure, forms a complex with the ssDNA-binding protein UL29, the DNA polymerase processivity factor, and the alkaline exonuclease. Interacts with the putative helicase-primase complex subunit UL8; this interaction may coordinate leading and lagging strand DNA synthesis at the replication fork.

It localises to the host nucleus. It carries out the reaction DNA(n) + a 2'-deoxyribonucleoside 5'-triphosphate = DNA(n+1) + diphosphate. The enzyme catalyses Endonucleolytic cleavage to 5'-phosphomonoester.. Functionally, replicates viral genomic DNA. The replication complex is composed of six viral proteins: the DNA polymerase, processivity factor, primase, primase-associated factor, helicase, and ssDNA-binding protein. Additionally, the polymerase contains an intrinsic ribonuclease H (RNase H) activity that specifically degrades RNA/DNA heteroduplexes or duplex DNA substrates in the 5' to 3' direction. Therefore, it can catalyze the excision of the RNA primers that initiate the synthesis of Okazaki fragments at a replication fork during viral DNA replication. The sequence is that of DNA polymerase catalytic subunit (UL30) from Psittacid herpesvirus 1 (isolate Amazon parrot/-/97-0001/1997) (PsHV-1).